We begin with the raw amino-acid sequence, 384 residues long: Na(+)/H(+) antiporter NhaA (384 aa).

Helical transmembrane passes span 9–29 (NLET…IIIA), 58–78 (LLLW…GLEI), 94–114 (LVPA…FIFF), 124–144 (GWAI…SLLG), 153–173 (ILLT…IALF), 179–199 (SLLS…LNYF), 204–224 (ISVF…SGVH), 256–276 (VVFL…FVGL), 285–305 (VVLG…FLSL), 325–345 (VYGI…IGSL), and 357–377 (MVKI…FLVL).

This sequence belongs to the NhaA Na(+)/H(+) (TC 2.A.33) antiporter family.

It localises to the cell inner membrane. It carries out the reaction Na(+)(in) + 2 H(+)(out) = Na(+)(out) + 2 H(+)(in). In terms of biological role, na(+)/H(+) antiporter that extrudes sodium in exchange for external protons. This is Na(+)/H(+) antiporter NhaA from Legionella pneumophila (strain Lens).